Consider the following 212-residue polypeptide: MAYAYLFKYIIIGDTGVGKSCLLLQFTDKRFQPVHDLTMGVEFGARMITIDGKQIKLQIWDTAGQESFRSITRSYYRGAAGALLVYDITRRDTFNHLTTWLEDARQHSNSNMVIMLIGNKSDLESRREVKKEEGEAFAREHGLIFMETSAKTASNVEEAFINTAKEIYEKIQEGVFDINNEANGIKIGPQHAATNASHGGNQGGQQAGGGCC.

N-acetylalanine is present on Ala-2. Positions 2-19 (AYAYLFKYIIIGDTGVGK) are required for interaction with PRKCI. The GTP site is built by Gly-16, Val-17, Gly-18, Lys-19, Ser-20, Cys-21, and Thr-38. Ser-20 provides a ligand contact to Mg(2+). Positions 37-42 (LTMGVE) match the Switch 1 motif. Positions 38 and 61 each coordinate Mg(2+). The Switch 2 motif lies at 63-72 (AGQESFRSIT). GTP-binding residues include Gly-64, Asn-119, Lys-120, Asp-122, Ala-150, and Lys-151. A disordered region spans residues 190 to 212 (QHAATNASHGGNQGGQQAGGGCC). Positions 200–212 (GNQGGQQAGGGCC) are enriched in gly residues. 2 S-geranylgeranyl cysteine lipidation sites follow: Cys-211 and Cys-212.

The protein belongs to the small GTPase superfamily. Rab family. Interacts with PRKCI. Interacts with TRIP11. Interacts (in GTP-bound form) with GARIN1B. Interacts (GTP-bound) with HOPS complex component VPS39; interaction contributes to obtaining a functional HOPS complex that promotes autophagosome-lysosome membrane fusion driven by STX17-SNAP29-VAMP8. May interact with VPS41. Mg(2+) is required as a cofactor. Post-translationally, prenylated. Prenylation is required for association with cellular membranes.

Its subcellular location is the endoplasmic reticulum-Golgi intermediate compartment membrane. It is found in the melanosome. The protein resides in the endoplasmic reticulum membrane. The protein localises to the golgi apparatus membrane. It localises to the cytoplasmic vesicle. Its subcellular location is the secretory vesicle. It is found in the acrosome. The protein resides in the autophagosome membrane. The catalysed reaction is GTP + H2O = GDP + phosphate + H(+). Regulated by guanine nucleotide exchange factors (GEFs) which promote the exchange of bound GDP for free GTP, GTPase activating proteins (GAPs) which increase the GTP hydrolysis activity, and GDP dissociation inhibitors (GDIs) which inhibit the dissociation of the nucleotide from the GTPase. In terms of biological role, the small GTPases Rab are key regulators of intracellular membrane trafficking, from the formation of transport vesicles to their fusion with membranes. Rabs cycle between active GTP-bound and inactive GDP-bound states. In their active state, drive transport of vesicular carriers from donor organelles to acceptor organelles to regulate the membrane traffic that maintains organelle identity and morphology. RAB2A regulates autophagy by promoting autophagosome-lysosome fusion via recruitment of the HOPS endosomal tethering complex; this process involves autophagosomal RAB2A and lysosomal RAB39A recruitment of HOPS subcomplexes VPS39-VPS11 and VPS41-VPS16-VPS18-VPS33A, respectively, which assemble into a functional complex to mediate membrane tethering and SNAREs-driven membrane fusion. Required for protein transport from the endoplasmic reticulum to the Golgi complex. Regulates the compacted morphology of the Golgi. Together with RAB2B, redundantly required for efficient autophagic flux. The protein is Ras-related protein Rab-2A (Rab2a) of Rattus norvegicus (Rat).